The following is a 986-amino-acid chain: P3N-PIPO polyprotein (986 aa).

The Peptidase S30 domain occupies 141–284; the sequence is KLTEGQMNHL…QSILNSMIQF (144 aa). Residues His192, Asp201, and Ser235 each act as for P1 proteinase activity in the active site. The Involved in interaction with stylet and aphid transmission signature appears at 334–337; sequence KITC. The Involved in virions binding and aphid transmission motif lies at 592 to 594; sequence PTK. A Peptidase C6 domain is found at 618-740; the sequence is LYIAKQGYCY…ESDIKHYRVG (123 aa). Active-site for helper component proteinase activity residues include Cys626 and His699.

It belongs to the potyviridae P3N-PIPO polyprotein family. Interacts (via PIPO domain) with host PCaP1 protein; this interaction may help to anchor the movement complex to the plasma membrane from which the complex could move to the plasmodesmata. Post-translationally, potyviral RNA is expressed as two polyproteins which undergo post-translational proteolytic processing. Genome polyprotein is processed by NIa-pro, P1 and HC-pro proteinases resulting in the production of at least ten individual proteins. P3N-PIPO is cleaved by P1 and HC-pro proteinases resulting in the production of three individual proteins. The P1 proteinase and the HC-pro cleave only their respective C-termini autocatalytically.

It is found in the host cell junction. It localises to the host plasmodesma. It carries out the reaction Hydrolyzes a Gly-|-Gly bond at its own C-terminus, commonly in the sequence -Tyr-Xaa-Val-Gly-|-Gly, in the processing of the potyviral polyprotein.. Functionally, required for aphid transmission and also has proteolytic activity. Only cleaves a Gly-Gly dipeptide at its own C-terminus. Interacts with virions and aphid stylets. Acts as a suppressor of RNA-mediated gene silencing, also known as post-transcriptional gene silencing (PTGS), a mechanism of plant viral defense that limits the accumulation of viral RNAs. May have RNA-binding activity. Its function is as follows. Allows efficient cell to cell propagation, by bypassing the host cell wall barrier. Transports viral genome to neighboring plant cells directly through plasmosdesmata, without any budding. This is P3N-PIPO polyprotein from Potato virus Y (strain N) (PVY).